Consider the following 59-residue polypeptide: Large ribosomal subunit protein bL33 (59 aa).

It belongs to the bacterial ribosomal protein bL33 family.

This Borrelia recurrentis (strain A1) protein is Large ribosomal subunit protein bL33.